The sequence spans 276 residues: NH(3)-dependent NAD(+) synthetase (276 aa).

Position 43–50 (43–50 (GISGGVDS)) interacts with ATP. Asp49 provides a ligand contact to Mg(2+). Deamido-NAD(+) is bound at residue Arg146. An ATP-binding site is contributed by Thr166. A Mg(2+)-binding site is contributed by Glu171. Positions 179 and 186 each coordinate deamido-NAD(+). Residues Lys195 and Thr217 each contribute to the ATP site. 266 to 267 (HK) contributes to the deamido-NAD(+) binding site.

It belongs to the NAD synthetase family. As to quaternary structure, homodimer.

It carries out the reaction deamido-NAD(+) + NH4(+) + ATP = AMP + diphosphate + NAD(+) + H(+). Its pathway is cofactor biosynthesis; NAD(+) biosynthesis; NAD(+) from deamido-NAD(+) (ammonia route): step 1/1. In terms of biological role, catalyzes the ATP-dependent amidation of deamido-NAD to form NAD. Uses ammonia as a nitrogen source. This Shewanella woodyi (strain ATCC 51908 / MS32) protein is NH(3)-dependent NAD(+) synthetase.